Consider the following 311-residue polypeptide: D-alanine--D-alanine ligase (311 aa).

The ATP-grasp domain maps to 105–306 (KQLYIHAGLP…FSALLDRLIE (202 aa)). An ATP-binding site is contributed by 133-188 (ADRLGLPVVVKPEHEGSSIGLSIVRNRDQLAAAVETGWQYDRRCLIEKYVHGIEIT). Mg(2+) contacts are provided by aspartate 261, glutamate 273, and asparagine 275.

Belongs to the D-alanine--D-alanine ligase family. Requires Mg(2+) as cofactor. Mn(2+) serves as cofactor.

It localises to the cytoplasm. The enzyme catalyses 2 D-alanine + ATP = D-alanyl-D-alanine + ADP + phosphate + H(+). Its pathway is cell wall biogenesis; peptidoglycan biosynthesis. Cell wall formation. This chain is D-alanine--D-alanine ligase, found in Syntrophobacter fumaroxidans (strain DSM 10017 / MPOB).